Consider the following 152-residue polypeptide: Superoxide dismutase [Cu-Zn] 1 (152 aa).

3 residues coordinate Cu cation: histidine 45, histidine 47, and histidine 62. Cysteine 56 and cysteine 145 form a disulfide bridge. 4 residues coordinate Zn(2+): histidine 62, histidine 70, histidine 79, and aspartate 82. A Cu cation-binding site is contributed by histidine 119.

The protein belongs to the Cu-Zn superoxide dismutase family. As to quaternary structure, homodimer. Cu cation is required as a cofactor. Zn(2+) serves as cofactor.

It is found in the cytoplasm. The catalysed reaction is 2 superoxide + 2 H(+) = H2O2 + O2. Destroys radicals which are normally produced within the cells and which are toxic to biological systems. The protein is Superoxide dismutase [Cu-Zn] 1 (SODCC.1) of Mesembryanthemum crystallinum (Common ice plant).